The primary structure comprises 230 residues: Uracil-DNA glycosylase (230 aa).

The Proton acceptor role is filled by D70.

This sequence belongs to the uracil-DNA glycosylase (UDG) superfamily. UNG family.

It is found in the cytoplasm. The enzyme catalyses Hydrolyzes single-stranded DNA or mismatched double-stranded DNA and polynucleotides, releasing free uracil.. Functionally, excises uracil residues from the DNA which can arise as a result of misincorporation of dUMP residues by DNA polymerase or due to deamination of cytosine. This chain is Uracil-DNA glycosylase, found in Pseudomonas syringae pv. syringae (strain B728a).